The primary structure comprises 1152 residues: Receptor-type guanylate cyclase gcy-8 (1152 aa).

Positions 1 to 21 (MRTKKAFLLLTFNVLIYLAAC) are cleaved as a signal peptide. The Extracellular segment spans residues 22–506 (QETERILANN…GYRNERCDYT (485 aa)). Residues Asn31, Asn55, Asn385, and Asn465 are each glycosylated (N-linked (GlcNAc...) asparagine). Residues 507–527 (LIIIGAALILLFIVAAVSAFF) traverse the membrane as a helical segment. The Cytoplasmic portion of the chain corresponds to 528–1152 (AQKILEKRAL…NLKNPTGLQR (625 aa)). Residues 567-857 (RTKMSNMNYG…RIKLNVETYL (291 aa)) form the Protein kinase domain. ATP is bound by residues 573–581 (MNYGSRNHA) and Lys593. Residues 861–899 (GSLVDQMTRMMEQYANNLEKLVAERTGMLEEANQRADRL) are a coiled coil. Positions 927-1057 (TVLFSDIVGF…DTVNMASRME (131 aa)) constitute a Guanylate cyclase domain. Mg(2+)-binding residues include Asp932, Ile933, and Asp976.

The protein belongs to the adenylyl cyclase class-4/guanylyl cyclase family. In terms of tissue distribution, expressed bilaterally in AFD sensory neurons.

It localises to the cell membrane. The protein localises to the cell projection. Its subcellular location is the cilium. The enzyme catalyses GTP = 3',5'-cyclic GMP + diphosphate. Its activity is regulated as follows. Inhibited by chloride with an IC(50) of 60 mM. Functionally, guanylate cyclase involved in the production of the second messenger cGMP. Regulates thermotaxis responses in AFD sensory neurons. May regulate AFD neuronal activity such as calcium responses to temperature gradients. Maintains the microvilli receptive ending morphology of the AFD thermosensory neurons by regulating cGMP levels downstream of kcc-3. cGMP levels antagonize the actin cytoskeleton regulator wsp-1. This is Receptor-type guanylate cyclase gcy-8 from Caenorhabditis elegans.